We begin with the raw amino-acid sequence, 218 residues long: MGQKINPLGFRVGVTQQHYSYWFAQPKNYSKFLEEDEKVRTCIEKYVQKQIKNSSNYGGIARIEIEGKTDLLQIEIYTGFPDSLVEENGLGIDKLRTNIENLLKKKSQKIQITLKNVLQPYGEPRILAEHIALQLENRVAFRRTVKKAIELAKKTDIKGIKIQIAGRLNGNEIARVEWVREGRVPLQTIRAHINYCYYPAQTIYGVLGIKIWVFRDEE.

The KH type-2 domain occupies 47-118 (VQKQIKNSSN…KIQITLKNVL (72 aa)).

The protein belongs to the universal ribosomal protein uS3 family. As to quaternary structure, part of the 30S ribosomal subunit.

It localises to the plastid. Its subcellular location is the chloroplast. In Angiopteris evecta (Mule's foot fern), this protein is Small ribosomal subunit protein uS3c (rps3).